We begin with the raw amino-acid sequence, 125 residues long: Large ribosomal subunit protein bL12 (125 aa).

Belongs to the bacterial ribosomal protein bL12 family. Homodimer. Part of the ribosomal stalk of the 50S ribosomal subunit. Forms a multimeric L10(L12)X complex, where L10 forms an elongated spine to which 2 to 4 L12 dimers bind in a sequential fashion. Binds GTP-bound translation factors.

In terms of biological role, forms part of the ribosomal stalk which helps the ribosome interact with GTP-bound translation factors. Is thus essential for accurate translation. This chain is Large ribosomal subunit protein bL12, found in Chelativorans sp. (strain BNC1).